The sequence spans 476 residues: Cysteine--tRNA ligase (476 aa).

A Zn(2+)-binding site is contributed by Cys-28. The 'HIGH' region motif lies at 30–40; that stretch reads PTVYDHTHLGH. Cys-208, His-233, and Glu-237 together coordinate Zn(2+). Residues 265 to 269 carry the 'KMSKS' region motif; it reads KMSKS. Lys-268 is a binding site for ATP.

It belongs to the class-I aminoacyl-tRNA synthetase family. The cofactor is Zn(2+).

The protein resides in the cytoplasm. It catalyses the reaction tRNA(Cys) + L-cysteine + ATP = L-cysteinyl-tRNA(Cys) + AMP + diphosphate. The chain is Cysteine--tRNA ligase from Methanococcus maripaludis (strain C6 / ATCC BAA-1332).